A 348-amino-acid polypeptide reads, in one-letter code: Holliday junction branch migration complex subunit RuvB (348 aa).

Residues 1–184 are large ATPase domain (RuvB-L); that stretch reads MTLNRDMVSP…FGIVQRLEFY (184 aa). Residues leucine 23, arginine 24, glycine 65, lysine 68, threonine 69, threonine 70, arginine 174, tyrosine 184, and arginine 221 each contribute to the ATP site. Threonine 69 contributes to the Mg(2+) binding site. A small ATPAse domain (RuvB-S) region spans residues 185 to 255; sequence AVDHLVLIVE…VAQKALDLLD (71 aa). The tract at residues 258-348 is head domain (RuvB-H); sequence SHGFDTMDRK…QEVSDLFPNE (91 aa). Positions 294, 313, and 318 each coordinate DNA.

The protein belongs to the RuvB family. In terms of assembly, homohexamer. Forms an RuvA(8)-RuvB(12)-Holliday junction (HJ) complex. HJ DNA is sandwiched between 2 RuvA tetramers; dsDNA enters through RuvA and exits via RuvB. An RuvB hexamer assembles on each DNA strand where it exits the tetramer. Each RuvB hexamer is contacted by two RuvA subunits (via domain III) on 2 adjacent RuvB subunits; this complex drives branch migration. In the full resolvosome a probable DNA-RuvA(4)-RuvB(12)-RuvC(2) complex forms which resolves the HJ.

It is found in the cytoplasm. The enzyme catalyses ATP + H2O = ADP + phosphate + H(+). Functionally, the RuvA-RuvB-RuvC complex processes Holliday junction (HJ) DNA during genetic recombination and DNA repair, while the RuvA-RuvB complex plays an important role in the rescue of blocked DNA replication forks via replication fork reversal (RFR). RuvA specifically binds to HJ cruciform DNA, conferring on it an open structure. The RuvB hexamer acts as an ATP-dependent pump, pulling dsDNA into and through the RuvAB complex. RuvB forms 2 homohexamers on either side of HJ DNA bound by 1 or 2 RuvA tetramers; 4 subunits per hexamer contact DNA at a time. Coordinated motions by a converter formed by DNA-disengaged RuvB subunits stimulates ATP hydrolysis and nucleotide exchange. Immobilization of the converter enables RuvB to convert the ATP-contained energy into a lever motion, pulling 2 nucleotides of DNA out of the RuvA tetramer per ATP hydrolyzed, thus driving DNA branch migration. The RuvB motors rotate together with the DNA substrate, which together with the progressing nucleotide cycle form the mechanistic basis for DNA recombination by continuous HJ branch migration. Branch migration allows RuvC to scan DNA until it finds its consensus sequence, where it cleaves and resolves cruciform DNA. The sequence is that of Holliday junction branch migration complex subunit RuvB from Nitrosococcus oceani (strain ATCC 19707 / BCRC 17464 / JCM 30415 / NCIMB 11848 / C-107).